Here is a 309-residue protein sequence, read N- to C-terminus: Carbamate kinase 2 (309 aa).

It belongs to the carbamate kinase family.

It is found in the cytoplasm. The catalysed reaction is hydrogencarbonate + NH4(+) + ATP = carbamoyl phosphate + ADP + H2O + H(+). Its pathway is metabolic intermediate metabolism; carbamoyl phosphate degradation; CO(2) and NH(3) from carbamoyl phosphate: step 1/1. In Staphylococcus epidermidis (strain ATCC 12228 / FDA PCI 1200), this protein is Carbamate kinase 2 (arcC2).